Consider the following 421-residue polypeptide: 4-methylaminobutanoate oxidase (methylamine-forming) (421 aa).

Residues glutamate 31, arginine 33, arginine 39, and glutamate 379 each coordinate FAD.

It belongs to the flavin monoamine oxidase family. Monomer. It depends on FAD as a cofactor.

The enzyme catalyses 4-(methylamino)butanoate + O2 + H2O = succinate semialdehyde + methylamine + H2O2. It participates in alkaloid degradation; nicotine degradation. In terms of biological role, catalyzes the removal of methylamine from 4-methylaminobutanoate with the formation of succinate semialdehyde. Is involved in the catabolism of 4-methylaminobutanoate produced from nicotine. Has a very weak monoamine oxidase activity with 4-aminobutanoate. Cannot use spermidine, spermine, sarcosine, dimethylglycine, glycine, choline, betaine, alpha-methylamino isobutyrate, methylamine propionitrile and methylamino propylamine as substrate. The polypeptide is 4-methylaminobutanoate oxidase (methylamine-forming) (mao) (Paenarthrobacter nicotinovorans (Arthrobacter nicotinovorans)).